The sequence spans 350 residues: MSKNKLSKGQQRRVQANHQRRLRTDRKPELDDSQLGDAQEGIVISRFGQHADVEAADGVQHRCNIRRTIKSLVTGDRVVWRPGLQAQEGVRVKGIVEAVHERTSVLTRPDLYDGVKPIAANIDQIVIVSAILPELSLNIIDRYLVACETLDVEPLIVLNKIDLLDADGRKFVDGMMDIYRRIGYNVLEVSSQTREGMEAFEQALAGRISIFAGQSGVGKSSLLNALLPPTDNEILVNTVSDNSGLGQHTTTAARLYHFQHGGDVIDSPGVREFGLWHLAPEQITQGFVEFRDYLGHCKFRDCSHTNDPGCALREAVEQGKIAEERFDNYHRILESMEQAKPRKTSDSDEK.

Over residues 1-17 (MSKNKLSKGQQRRVQAN) the composition is skewed to polar residues. The tract at residues 1 to 35 (MSKNKLSKGQQRRVQANHQRRLRTDRKPELDDSQL) is disordered. The region spanning 103–273 (TSVLTRPDLY…VIDSPGVREF (171 aa)) is the CP-type G domain. Residues 159-162 (NKID) and 213-221 (GQSGVGKSS) contribute to the GTP site. Zn(2+) contacts are provided by Cys-297, Cys-302, His-304, and Cys-310.

This sequence belongs to the TRAFAC class YlqF/YawG GTPase family. RsgA subfamily. Monomer. Associates with 30S ribosomal subunit, binds 16S rRNA. The cofactor is Zn(2+).

It localises to the cytoplasm. One of several proteins that assist in the late maturation steps of the functional core of the 30S ribosomal subunit. Helps release RbfA from mature subunits. May play a role in the assembly of ribosomal proteins into the subunit. Circularly permuted GTPase that catalyzes slow GTP hydrolysis, GTPase activity is stimulated by the 30S ribosomal subunit. The sequence is that of Small ribosomal subunit biogenesis GTPase RsgA from Yersinia enterocolitica serotype O:8 / biotype 1B (strain NCTC 13174 / 8081).